A 123-amino-acid polypeptide reads, in one-letter code: Large ribosomal subunit protein eL8 (123 aa).

The protein belongs to the eukaryotic ribosomal protein eL8 family. As to quaternary structure, part of the 50S ribosomal subunit. Probably part of the RNase P complex.

The protein localises to the cytoplasm. Functionally, multifunctional RNA-binding protein that recognizes the K-turn motif in ribosomal RNA, the RNA component of RNase P, box H/ACA, box C/D and box C'/D' sRNAs. This chain is Large ribosomal subunit protein eL8, found in Methanothermobacter thermautotrophicus (strain ATCC 29096 / DSM 1053 / JCM 10044 / NBRC 100330 / Delta H) (Methanobacterium thermoautotrophicum).